The sequence spans 425 residues: Elongation factor 1-alpha (425 aa).

The tr-type G domain occupies 5–221; that stretch reads KPHINLAVIG…DELEVPDKPT (217 aa). The segment at 14–21 is G1; it reads GHIDHGKS. 14–21 contributes to the GTP binding site; that stretch reads GHIDHGKS. Position 21 (Ser-21) interacts with Mg(2+). Residues 70 to 74 form a G2 region; that stretch reads GITID. Residues 91–94 form a G3 region; it reads DCPG. GTP contacts are provided by residues 91 to 95 and 146 to 149; these read DCPGH and NKMD. Positions 146-149 are G4; it reads NKMD. The G5 stretch occupies residues 185 to 187; sequence SAF.

Belongs to the TRAFAC class translation factor GTPase superfamily. Classic translation factor GTPase family. EF-Tu/EF-1A subfamily.

It localises to the cytoplasm. It carries out the reaction GTP + H2O = GDP + phosphate + H(+). In terms of biological role, GTP hydrolase that promotes the GTP-dependent binding of aminoacyl-tRNA to the A-site of ribosomes during protein biosynthesis. The protein is Elongation factor 1-alpha of Methanospirillum hungatei JF-1 (strain ATCC 27890 / DSM 864 / NBRC 100397 / JF-1).